Consider the following 509-residue polypeptide: ATP synthase subunit alpha (509 aa).

169–176 provides a ligand contact to ATP; that stretch reads GDRQTGKT.

This sequence belongs to the ATPase alpha/beta chains family. F-type ATPases have 2 components, CF(1) - the catalytic core - and CF(0) - the membrane proton channel. CF(1) has five subunits: alpha(3), beta(3), gamma(1), delta(1), epsilon(1). CF(0) has three main subunits: a(1), b(2) and c(9-12). The alpha and beta chains form an alternating ring which encloses part of the gamma chain. CF(1) is attached to CF(0) by a central stalk formed by the gamma and epsilon chains, while a peripheral stalk is formed by the delta and b chains.

The protein localises to the cell inner membrane. The catalysed reaction is ATP + H2O + 4 H(+)(in) = ADP + phosphate + 5 H(+)(out). Produces ATP from ADP in the presence of a proton gradient across the membrane. The alpha chain is a regulatory subunit. The protein is ATP synthase subunit alpha of Methylobacterium sp. (strain 4-46).